Reading from the N-terminus, the 91-residue chain is DNA-binding protein HU (91 aa).

This sequence belongs to the bacterial histone-like protein family. As to quaternary structure, homodimer.

Its function is as follows. Histone-like DNA-binding protein which is capable of wrapping DNA to stabilize it, and thus to prevent its denaturation under extreme environmental conditions. This chain is DNA-binding protein HU (hup), found in Lactococcus lactis subsp. lactis (strain IL1403) (Streptococcus lactis).